A 1259-amino-acid chain; its full sequence is MRGNNLRGGVGEYKINDVLGTRFQNFMDLVDQQKLTPFLVRNLDASLASATGSPYGLDDLHPDFAEYVMAVSAALRQIESPELTKVQVTGKYGNALESIVNDLFSGTTSGLIAQPTQPFGFNQLPFHNNHPNIKHLIPGFHLFPYTSAVYPTVNQNNNALINAILYLYHYISLLDLDSGVDARNIVSFLKKDNLVFNRYVNDIVTTMTNNNFFSQSLGFPTGQPTDEIVRDSVLQGLTGVAYQIVNRLRNVQASNQTFANLGAVAGQDISAKDAFAKFVSSVATPGYPGVNADKLFDAFSKITGGFYDQGPDVVNIADVDNDQAKQYRTNGLLNPVYILSPSIAKTVNADDYDKLNQAGGKRNSSMNNSTQNNNSSRSNNSARNNNSVWNNNNSAWKNNNSAWNDNSSWKNNNRFGQAGGITFGDIGAAPAGSVLSLPFLYGPALPDGSHKLITEDEQGDQNDAKLVDIDSVKEIEDLTDPNNITGIIPEIVDIGNDPNYNYARAQLVTLLYQLIVNEATFDQASGLPNLDNEIRNAAQNYNKIVVRLRAIPTSNFGSSMADLRDSFLSEFVNTSYRQFQVEKQTGNLITGQQTIANKGSNFANPDIKSFYDNTLVNNADFYKTYFNLVKLGPNGVVVDADVKDITEAKGKSDAELQNYRLNVRKNTGYTRFTGAQVGGLLGDIVFIDRIPAFPQDGSIRNVWLTRAIALTPVTLNAYNVEALRRIAREVYNSPVGQSTVPVYGQPVDLTLIAQSAARMNFPISNVAFRDTFNNLLQNALNQAATGTAVTPGFIEQEDKLVEHLLRVSSRWERDGNTFIFKDLSGNPVQTDPADNCLLIDTSTRECLSVLTQCIADPGTKLSDTCARLMEFNFKVNPPLNLLKDEISKMNPGVAFEILRKFGFGSYLAEDKDDSGSVIRRYKVQSVGSWIRELMGESARCAPGQAPVVNQGPCRTISLREELGQANADKILNMAKDSAPFLRYLEVLVHWVNANPQVLNPEETKDQSTLCPTSYPKVNDSFNTYSYLNPYKDVVYRLRNTTCDLERLKCSIMGNYLGSGSRKIFTDLATIPHDTNMPFTRIGFTSTVPLLNKVPMFGGDGGIYNLQNQLNNLNNPVGYNMFHQIYKDLLNTMGNIGDSRCIRLSSNTQARCEDKLESFKNAEIELNKCLNRLIERNKIYQATRGRIDLNRVPPENVAAVLEKHSNLLNMNSAYNKKAVNLIDIFQTIAKAIINKVEEGAPKQTVERPLTMGFHNPSYNF.

Positions 354–410 (KLNQAGGKRNSSMNNSTQNNNSSRSNNSARNNNSVWNNNNSAWKNNNSAWNDNSSWK) are disordered. Residues 362 to 410 (RNSSMNNSTQNNNSSRSNNSARNNNSVWNNNNSAWKNNNSAWNDNSSWK) are compositionally biased toward low complexity.

It is found in the virion. This is an uncharacterized protein from Acanthamoeba polyphaga (Amoeba).